The chain runs to 239 residues: Carboxy-S-adenosyl-L-methionine synthase (239 aa).

S-adenosyl-L-methionine-binding positions include Y35, 64–66 (GCS), 88–89 (DN), and R195.

The protein belongs to the class I-like SAM-binding methyltransferase superfamily. Cx-SAM synthase family. As to quaternary structure, homodimer.

The catalysed reaction is prephenate + S-adenosyl-L-methionine = carboxy-S-adenosyl-L-methionine + 3-phenylpyruvate + H2O. Functionally, catalyzes the conversion of S-adenosyl-L-methionine (SAM) to carboxy-S-adenosyl-L-methionine (Cx-SAM). The protein is Carboxy-S-adenosyl-L-methionine synthase of Helicobacter pylori (strain HPAG1).